The primary structure comprises 335 residues: Transcription factor IIIA (335 aa).

9 C2H2-type zinc fingers span residues 13-37, 43-67, 73-98, 105-129, 135-159, 162-188, 192-214, 221-246, and 252-276; these read YICS…LCKH, FPCT…SMTH, CKCD…QRAH, YECY…QYIH, FKCN…EKVH, YPCQ…AASH, TICD…KRTH, YKCP…LSFH, and FACG…ANTH. Residues 269-280 show a composition bias toward basic and acidic residues; that stretch reads LDRHANTHDPEK. Positions 269–335 are disordered; it reads LDRHANTHDP…ATAMQNLSIK (67 aa). Positions 281–292 are enriched in basic residues; that stretch reads KKMKKPRPKKSL.

Its subcellular location is the nucleus. Functionally, involved in ribosomal large subunit biogenesis. Interacts with the internal control region (ICR) of approximately 50 bases within the 5S RNA genes, is required for correct transcription of these genes by RNA polymerase III. Also binds the transcribed 5S RNA's. The chain is Transcription factor IIIA (gtf3a) from Lithobates pipiens (Northern leopard frog).